Reading from the N-terminus, the 228-residue chain is ATP-dependent dethiobiotin synthetase BioD (228 aa).

12 to 17 (EIGKTT) lines the ATP pocket. Residue Thr-16 participates in Mg(2+) binding. Residue Lys-37 is part of the active site. Substrate is bound at residue Ser-41. ATP-binding positions include Asp-54, 116-119 (EGAG), and 205-207 (PRL). 2 residues coordinate Mg(2+): Asp-54 and Glu-116.

The protein belongs to the dethiobiotin synthetase family. As to quaternary structure, homodimer. Mg(2+) is required as a cofactor.

Its subcellular location is the cytoplasm. The enzyme catalyses (7R,8S)-7,8-diammoniononanoate + CO2 + ATP = (4R,5S)-dethiobiotin + ADP + phosphate + 3 H(+). The protein operates within cofactor biosynthesis; biotin biosynthesis; biotin from 7,8-diaminononanoate: step 1/2. Catalyzes a mechanistically unusual reaction, the ATP-dependent insertion of CO2 between the N7 and N8 nitrogen atoms of 7,8-diaminopelargonic acid (DAPA, also called 7,8-diammoniononanoate) to form a ureido ring. The protein is ATP-dependent dethiobiotin synthetase BioD of Pseudomonas paraeruginosa (strain DSM 24068 / PA7) (Pseudomonas aeruginosa (strain PA7)).